The sequence spans 148 residues: U5-hexatoxin-Hi1a (148 aa).

The first 21 residues, 1–21 (MNFSVVAVALVVVLTVHFTDG), serve as a signal peptide directing secretion. The propeptide occupies 22 to 38 (QETSSSLPSPPSPLPGR). The tract at residues 125 to 148 (TPSTTVTTPTPTTETPTTETPSTP) is disordered.

Contains 2 disulfide bonds. As to expression, expressed by the venom gland.

The protein localises to the secreted. Probable ion channel inhibitor. This Hadronyche infensa (Fraser island funnel-web spider) protein is U5-hexatoxin-Hi1a.